A 206-amino-acid chain; its full sequence is FMN-dependent NADH:quinone oxidoreductase (206 aa).

FMN-binding positions include Ser-9, 15-17 (SVS), and 139-142 (SRGG).

This sequence belongs to the azoreductase type 1 family. As to quaternary structure, homodimer. It depends on FMN as a cofactor.

It catalyses the reaction 2 a quinone + NADH + H(+) = 2 a 1,4-benzosemiquinone + NAD(+). The enzyme catalyses N,N-dimethyl-1,4-phenylenediamine + anthranilate + 2 NAD(+) = 2-(4-dimethylaminophenyl)diazenylbenzoate + 2 NADH + 2 H(+). Functionally, quinone reductase that provides resistance to thiol-specific stress caused by electrophilic quinones. Its function is as follows. Also exhibits azoreductase activity. Catalyzes the reductive cleavage of the azo bond in aromatic azo compounds to the corresponding amines. This Cupriavidus necator (strain ATCC 17699 / DSM 428 / KCTC 22496 / NCIMB 10442 / H16 / Stanier 337) (Ralstonia eutropha) protein is FMN-dependent NADH:quinone oxidoreductase.